Consider the following 433-residue polypeptide: UPF0597 protein Spea_0809 (433 aa).

The protein belongs to the UPF0597 family.

This chain is UPF0597 protein Spea_0809, found in Shewanella pealeana (strain ATCC 700345 / ANG-SQ1).